Reading from the N-terminus, the 351-residue chain is Anthranilate phosphoribosyltransferase (351 aa).

Residues glycine 85, 88–89 (GD), serine 93, 95–98 (NIST), 113–121 (KHGNRAASS), and threonine 125 each bind 5-phospho-alpha-D-ribose 1-diphosphate. Glycine 85 contributes to the anthranilate binding site. Mg(2+) is bound at residue serine 97. An anthranilate-binding site is contributed by asparagine 116. An anthranilate-binding site is contributed by arginine 171. Mg(2+) is bound by residues aspartate 229 and glutamate 230.

It belongs to the anthranilate phosphoribosyltransferase family. In terms of assembly, homodimer. Mg(2+) is required as a cofactor.

The enzyme catalyses N-(5-phospho-beta-D-ribosyl)anthranilate + diphosphate = 5-phospho-alpha-D-ribose 1-diphosphate + anthranilate. The protein operates within amino-acid biosynthesis; L-tryptophan biosynthesis; L-tryptophan from chorismate: step 2/5. In terms of biological role, catalyzes the transfer of the phosphoribosyl group of 5-phosphorylribose-1-pyrophosphate (PRPP) to anthranilate to yield N-(5'-phosphoribosyl)-anthranilate (PRA). This chain is Anthranilate phosphoribosyltransferase, found in Saccharopolyspora erythraea (strain ATCC 11635 / DSM 40517 / JCM 4748 / NBRC 13426 / NCIMB 8594 / NRRL 2338).